The following is a 214-amino-acid chain: Cell division protein SepF (214 aa).

Residues 24-120 form a disordered region; the sequence is DNYEEYEERK…NTRRAQESTA (97 aa). Residues 30-40 show a composition bias toward basic and acidic residues; it reads EERKAVNEPPR. Residues 55-67 show a composition bias toward polar residues; sequence ESYSQPAYTQQSE. Over residues 69–98 the composition is skewed to basic and acidic residues; that stretch reads VVEKPSARYRSAEAHQERDTQQAAYTEKKV. Polar residues predominate over residues 101-120; sequence MRSSNQSATTNTRRAQESTA.

This sequence belongs to the SepF family. Homodimer. Interacts with FtsZ.

The protein localises to the cytoplasm. Its function is as follows. Cell division protein that is part of the divisome complex and is recruited early to the Z-ring. Probably stimulates Z-ring formation, perhaps through the cross-linking of FtsZ protofilaments. Its function overlaps with FtsA. The polypeptide is Cell division protein SepF (Enterococcus faecalis (strain ATCC 700802 / V583)).